The sequence spans 173 residues: NADH-ubiquinone oxidoreductase chain 6 (173 aa).

The next 5 membrane-spanning stretches (helical) occupy residues methionine 1–serine 21, tyrosine 27–glycine 47, valine 48–valine 68, valine 87–leucine 107, and cysteine 139–leucine 159.

Belongs to the complex I subunit 6 family.

Its subcellular location is the mitochondrion membrane. The enzyme catalyses a ubiquinone + NADH + 5 H(+)(in) = a ubiquinol + NAD(+) + 4 H(+)(out). Functionally, core subunit of the mitochondrial membrane respiratory chain NADH dehydrogenase (Complex I) that is believed to belong to the minimal assembly required for catalysis. Complex I functions in the transfer of electrons from NADH to the respiratory chain. The immediate electron acceptor for the enzyme is believed to be ubiquinone. In Synthliboramphus hypoleucus (Guadalupe murrelet), this protein is NADH-ubiquinone oxidoreductase chain 6 (MT-ND6).